The chain runs to 652 residues: MSSERPDEEKPETRDVLRVQDLIHGGGGASPVQSPTRLGPTRFSEVAGDKILNTGSNCIGSVLSWINGDPNRNLKNPVKRAKRKRIRTAKTAAFVIVLVGFFIFVNWFMLSQLHEGRAWLRRGFSKKTNLKPKLNPDPNSSVKRVSVKVSANVQHKEKKKMGKPKKTYNGTYGRLLAYAAHALAEGQNKLEPKELWREPKDQALAWKPCADQRSWKPSDGKNGYIMVTANGGINQQRVAVCNIVVVARMLNATLVIPKFMFSDVWTDASQFGDIYQVEHFIKYLSPDIRIVKKLPKELQSLDLEAIGSVVTDIDVMKEAKPGFYMKHILPLLLKNRVVHFLGFGNRLAFDPIPFELQRLRCRCNFHALNFVPKIQETGAILVRRLRDSGSHLAPVDPYLVGPKFASFILDKKAGPLHKASKYLAVHLRFEIDMVAHSLCYFGGGDAEKAELDAYREKHFPTLANLTKTQKMPSPDDLRTEGLCPLSPEEAVLMLAGLGFSRKTRVFVAGANIYGGNKRLAALTSLYPNLVTKENVLSQTELEPFKNFSSQLAVLDFIACAASDAFAMTDSGSQLSSLVSGYRIYYGAGKMPTIRPNKRRFSDILLKNNTIEWKVFEQRVRKTVRQTKHVLVRPTGRSVYRYPRCKECMCNED.

A helical; Signal-anchor for type II membrane protein membrane pass occupies residues 91–111 (TAAFVIVLVGFFIFVNWFMLS). Residues asparagine 139, asparagine 169, and asparagine 251 are each glycosylated (N-linked (GlcNAc...) asparagine). 426–428 (HLR) lines the substrate pocket. Residues asparagine 464, asparagine 546, and asparagine 607 are each glycosylated (N-linked (GlcNAc...) asparagine).

The protein belongs to the glycosyltransferase GT106 family.

It localises to the membrane. It functions in the pathway glycan metabolism. The polypeptide is O-fucosyltransferase 15 (Arabidopsis thaliana (Mouse-ear cress)).